Reading from the N-terminus, the 341-residue chain is NADH-ubiquinone oxidoreductase chain 2 (341 aa).

9 helical membrane passes run 8-28 (ILFI…NSWL), 60-80 (YFLT…LLML), 95-115 (MIIM…FWFP), 121-141 (LTWM…LMLI), 146-166 (IKYL…IGGL), 195-215 (SIWL…TFMF), 238-258 (FTLF…GFLP), 273-293 (FMLT…LRIC), and 321-341 (MIMT…YFMF).

The protein belongs to the complex I subunit 2 family.

The protein localises to the mitochondrion inner membrane. It carries out the reaction a ubiquinone + NADH + 5 H(+)(in) = a ubiquinol + NAD(+) + 4 H(+)(out). Core subunit of the mitochondrial membrane respiratory chain NADH dehydrogenase (Complex I) that is believed to belong to the minimal assembly required for catalysis. Complex I functions in the transfer of electrons from NADH to the respiratory chain. The immediate electron acceptor for the enzyme is believed to be ubiquinone. In Drosophila melanogaster (Fruit fly), this protein is NADH-ubiquinone oxidoreductase chain 2 (mt:ND2).